Here is a 57-residue protein sequence, read N- to C-terminus: UPF0391 membrane protein Atu4467 (57 aa).

2 consecutive transmembrane segments (helical) span residues 4 to 24 and 33 to 53; these read WALI…TGIS and ILFF…LMAG.

It belongs to the UPF0391 family.

The protein localises to the cell membrane. The chain is UPF0391 membrane protein Atu4467 from Agrobacterium fabrum (strain C58 / ATCC 33970) (Agrobacterium tumefaciens (strain C58)).